A 213-amino-acid chain; its full sequence is Ribosomal RNA large subunit methyltransferase E (213 aa).

Residues Gly59, Phe61, Asp79, Asp97, and Asp121 each coordinate S-adenosyl-L-methionine. Catalysis depends on Lys161, which acts as the Proton acceptor.

Belongs to the class I-like SAM-binding methyltransferase superfamily. RNA methyltransferase RlmE family.

It localises to the cytoplasm. The enzyme catalyses uridine(2552) in 23S rRNA + S-adenosyl-L-methionine = 2'-O-methyluridine(2552) in 23S rRNA + S-adenosyl-L-homocysteine + H(+). In terms of biological role, specifically methylates the uridine in position 2552 of 23S rRNA at the 2'-O position of the ribose in the fully assembled 50S ribosomal subunit. The polypeptide is Ribosomal RNA large subunit methyltransferase E (Myxococcus xanthus (strain DK1622)).